The primary structure comprises 229 residues: Ribonuclease 3 (229 aa).

The RNase III domain maps to 5-127; sequence LARLERQLGY…LIGAIYLDAG (123 aa). Residue Glu-40 coordinates Mg(2+). The active site involves Asp-44. Mg(2+) is bound by residues Asp-113 and Glu-116. Residue Glu-116 is part of the active site. Residues 154 to 224 enclose the DRBM domain; sequence DPKTRLQEFL…AAAALIALGV (71 aa).

This sequence belongs to the ribonuclease III family. In terms of assembly, homodimer. Requires Mg(2+) as cofactor.

The protein localises to the cytoplasm. It carries out the reaction Endonucleolytic cleavage to 5'-phosphomonoester.. Its function is as follows. Digests double-stranded RNA. Involved in the processing of primary rRNA transcript to yield the immediate precursors to the large and small rRNAs (23S and 16S). Processes some mRNAs, and tRNAs when they are encoded in the rRNA operon. Processes pre-crRNA and tracrRNA of type II CRISPR loci if present in the organism. The chain is Ribonuclease 3 from Pseudomonas fluorescens (strain SBW25).